Consider the following 288-residue polypeptide: Syntaxin-1A (288 aa).

Basic and acidic residues predominate over residues 1–13 (MKDRTQELRTAKD). The segment at 1-20 (MKDRTQELRTAKDSDDDDDV) is disordered. The Cytoplasmic portion of the chain corresponds to 1 to 265 (MKDRTQELRT…KYQSKARRKK (265 aa)). Phosphoserine occurs at positions 14, 64, and 95. Residues 68–109 (DEKTKEELEELMSDIKKTANKVRSKLKSIEQSIEQEEGLNRS) are a coiled coil. Position 188 is a phosphoserine; by DAPK1 (serine 188). A t-SNARE coiled-coil homology domain is found at 192–254 (LSEIETRHSE…ERAVSDTKKA (63 aa)). Residues lysine 252, lysine 253, and lysine 256 each participate in a glycyl lysine isopeptide (Lys-Gly) (interchain with G-Cter in SUMO) cross-link. The helical; Anchor for type IV membrane protein transmembrane segment at 266–288 (IMIIICCVILGIIIASTIGGIFG) threads the bilayer.

Belongs to the syntaxin family. Part of the SNARE core complex containing SNAP25, VAMP2 and STX1A; this complex constitutes the basic catalytic machinery of the complex neurotransmitter release apparatus. The SNARE complex interacts with CPLX1. Interacts with STXBP1. The interaction with STXBP1 promotes assembly of the SNARE complex. Interacts (via C-terminus) with KCNB1 (via C-terminus); the interaction increases in a calcium-dependent manner and induces a pore-independent enhancement of exocytosis in neuroendocrine cells, chromaffin cells, pancreatic beta cells and from the soma of dorsal root ganglia (DRG) neurons. Interacts with SYTL4. Interacts with STXBP6. Interacts with PLCL1 (via C2 domain). Interacts with OTOF. Interacts with LGI3. Interacts (via the H3 domain) with SLC6A4 (via the N-terminus); this interaction regulates SLC4A6 channel conductance in thalamocortical neurons. Interacts with SYT6 and SYT8; the interaction is Ca(2+)-dependent. Interacts with VAMP8. Interacts with SNAP23. Interacts with VAPA and SYBU. Interacts with PRRT2. Interacts with SEPT8. Interacts with STXBP5L. Interacts with synaptotagmin-1/SYT1. Interacts with SEPTIN5; in the cerebellar cortex. Interacts with SEPTIN4; in the striatum. Phosphorylated by CK2. Phosphorylation at Ser-188 by DAPK1 significantly decreases its interaction with STXBP1. In terms of processing, (Microbial infection) Targeted and hydrolyzed by C.botulinum neurotoxin type C (BoNT/C), which hydrolyzes the 253-Lys-|-Ala-254 bond. Cleavage inhibits neurotransmitter release. Post-translationally, phosphorylated by CK2. Phosphorylation at Ser-188 by DAPK1 significantly decreases its interaction with STXBP1. Sumoylated, sumoylation is required for regulation of synaptic vesicle endocytosis. Expressed predominantly in cerebral cortex, hippocampus, cerebellum, adrenal medulla and retina with weak expression detected in non-neuronal tissues.

It is found in the cytoplasmic vesicle. Its subcellular location is the secretory vesicle. The protein localises to the synaptic vesicle membrane. It localises to the cell membrane. The protein resides in the synapse. It is found in the synaptosome. In terms of biological role, plays an essential role in hormone and neurotransmitter calcium-dependent exocytosis and endocytosis. Part of the SNARE (Soluble NSF Attachment Receptor) complex composed of SNAP25, STX1A and VAMP2 which mediates the fusion of synaptic vesicles with the presynaptic plasma membrane. STX1A and SNAP25 are localized on the plasma membrane while VAMP2 resides in synaptic vesicles. The pairing of the three SNAREs from the N-terminal SNARE motifs to the C-terminal anchors leads to the formation of the SNARE complex, which brings membranes into close proximity and results in final fusion. Participates in the calcium-dependent regulation of acrosomal exocytosis in sperm. Also plays an important role in the exocytosis of hormones such as insulin or glucagon-like peptide 1 (GLP-1). The polypeptide is Syntaxin-1A (Stx1a) (Rattus norvegicus (Rat)).